Here is a 364-residue protein sequence, read N- to C-terminus: tRNA-specific 2-thiouridylase MnmA 1 (364 aa).

ATP contacts are provided by residues 10–17 (GMSGGVDS) and Met-36. Residue Cys-106 is the Nucleophile of the active site. Cysteines 106 and 204 form a disulfide. An ATP-binding site is contributed by Gly-130. The tract at residues 154 to 156 (KDQ) is interaction with tRNA. The active-site Cysteine persulfide intermediate is the Cys-204. The tract at residues 310–311 (RY) is interaction with tRNA.

Belongs to the MnmA/TRMU family.

Its subcellular location is the cytoplasm. The enzyme catalyses S-sulfanyl-L-cysteinyl-[protein] + uridine(34) in tRNA + AH2 + ATP = 2-thiouridine(34) in tRNA + L-cysteinyl-[protein] + A + AMP + diphosphate + H(+). Functionally, catalyzes the 2-thiolation of uridine at the wobble position (U34) of tRNA, leading to the formation of s(2)U34. The protein is tRNA-specific 2-thiouridylase MnmA 1 of Thermoanaerobacter pseudethanolicus (strain ATCC 33223 / 39E) (Clostridium thermohydrosulfuricum).